Here is a 203-residue protein sequence, read N- to C-terminus: Excretory canal abnormal exc-13 (203 aa).

Residues Met1 to Gly20 form the signal peptide. N-linked (GlcNAc...) asparagine glycosylation is found at Asn32, Asn84, and Asn188.

Belongs to the UPF0376 family.

It localises to the secreted. This is Excretory canal abnormal exc-13 from Caenorhabditis elegans.